Reading from the N-terminus, the 375-residue chain is Sperm microtubule associated protein 2 (375 aa).

The segment at 1–78 (MGELGEHRAS…MAGEELPETS (78 aa)) is disordered. A compositionally biased stretch (acidic residues) spans 59–75 (EPEEEIPPEEMAGEELP). THEG repeat units follow at residues 110 to 129 (AKGRKKRSRRLLELAKPKTN), 176 to 195 (TITVPVVSQRMEELSRPKRF), 214 to 233 (STLEYQASNRLKQLATPKVR), 250 to 269 (AAQMAVPTPRTLRLAKPRPP), 282 to 301 (PKPYVSDYNRLLQLATPKAL), 318 to 337 (VTKNAVASSRIISLAQPKIR), and 352 to 371 (ASLVAQASPRIYELATPKYI). Ser287 carries the post-translational modification Phosphoserine.

Interacts with CCT5. Testis specific (at protein level). Specifically expressed in spermatids; Sertoli cells maintain the level of expression in spermatids. If isolated spermatids are cultivated for 16 hours alone, the expression of THEG is down-regulated. May require signals from Sertoli cells to initiate changes in its gene expression through spermatogenesis.

The protein resides in the nucleus. May be involved (but not essential) in spermatogenesis. This Mus musculus (Mouse) protein is Sperm microtubule associated protein 2.